Consider the following 292-residue polypeptide: 4-diphosphocytidyl-2-C-methyl-D-erythritol kinase (292 aa).

K20 is a catalytic residue. P103 to S113 lines the ATP pocket. D145 is a catalytic residue.

Belongs to the GHMP kinase family. IspE subfamily.

The enzyme catalyses 4-CDP-2-C-methyl-D-erythritol + ATP = 4-CDP-2-C-methyl-D-erythritol 2-phosphate + ADP + H(+). It functions in the pathway isoprenoid biosynthesis; isopentenyl diphosphate biosynthesis via DXP pathway; isopentenyl diphosphate from 1-deoxy-D-xylulose 5-phosphate: step 3/6. In terms of biological role, catalyzes the phosphorylation of the position 2 hydroxy group of 4-diphosphocytidyl-2C-methyl-D-erythritol. This is 4-diphosphocytidyl-2-C-methyl-D-erythritol kinase from Cupriavidus metallidurans (strain ATCC 43123 / DSM 2839 / NBRC 102507 / CH34) (Ralstonia metallidurans).